A 201-amino-acid polypeptide reads, in one-letter code: NADH-quinone oxidoreductase subunit C (201 aa).

The protein belongs to the complex I 30 kDa subunit family. As to quaternary structure, NDH-1 is composed of 14 different subunits. Subunits NuoB, C, D, E, F, and G constitute the peripheral sector of the complex.

The protein localises to the cell inner membrane. The enzyme catalyses a quinone + NADH + 5 H(+)(in) = a quinol + NAD(+) + 4 H(+)(out). NDH-1 shuttles electrons from NADH, via FMN and iron-sulfur (Fe-S) centers, to quinones in the respiratory chain. The immediate electron acceptor for the enzyme in this species is believed to be ubiquinone. Couples the redox reaction to proton translocation (for every two electrons transferred, four hydrogen ions are translocated across the cytoplasmic membrane), and thus conserves the redox energy in a proton gradient. In Ruegeria sp. (strain TM1040) (Silicibacter sp.), this protein is NADH-quinone oxidoreductase subunit C.